The sequence spans 351 residues: High-affinity nickel transport protein (351 aa).

The Cytoplasmic segment spans residues 1–19 (MFQLLAGVRMNSTGRPRAK). Residues 20-40 (IILLYALLIAFNIGAWLCALA) form a helical membrane-spanning segment. Over 41-51 (AFRDHPVLLGT) the chain is Periplasmic. A helical membrane pass occupies residues 52–72 (ALLAYGLGLRHAVDADHLAAI). Topologically, residues 73 to 94 (DNVTRKLMQDGRRPITAGLWFS) are cytoplasmic. A helical membrane pass occupies residues 95–115 (LGHSSVVVLASVLIAVMATTL). The Periplasmic segment spans residues 116 to 128 (QERLDAFHEVGSV). Residues 129 to 149 (IGTLASALFLFAIAAINLVIL) traverse the membrane as a helical segment. The Cytoplasmic portion of the chain corresponds to 150–199 (RSAYRAFRRVRRGGIYVEEDFDLLFGNRGFLARIFRPLFRFITRSWHMYP). The chain crosses the membrane as a helical span at residues 200–220 (LGMLFALGFDTATEVALLGIS). At 221 to 243 (TMEASRGVPIWSILVFPALFTAG) the chain is on the periplasmic side. The helical transmembrane segment at 244-264 (MALIDTIDSILMCGAYAWAYA) threads the bilayer. The Cytoplasmic portion of the chain corresponds to 265–269 (KPVRK). A helical membrane pass occupies residues 270-290 (LYYNMTITFVSAIVALIVGGI). The Periplasmic segment spans residues 291–316 (ETLGLLADKFMLKGVFWNAVGALNEN). A helical transmembrane segment spans residues 317 to 337 (FCQLGFVIIGIFTVCWVVSIV). The Cytoplasmic segment spans residues 338–351 (VYRLRRYDDSEVRA).

It belongs to the NiCoT transporter (TC 2.A.52) family.

Its subcellular location is the cell inner membrane. High-affinity nickel transporter responsible for nickel uptake. Necessary for high levels of activity of hydrogenase and urease. Does not transport cobalt. The chain is High-affinity nickel transport protein (hoxN) from Cupriavidus necator (strain ATCC 17699 / DSM 428 / KCTC 22496 / NCIMB 10442 / H16 / Stanier 337) (Ralstonia eutropha).